We begin with the raw amino-acid sequence, 980 residues long: Hypoxia up-regulated protein 1 (980 aa).

An N-terminal signal peptide occupies residues 1 to 24 (MREKLSLWAIFCLVVAFLPSQTES). Disordered regions lie at residues 558–682 (EEES…DIAV) and 894–980 (KPKP…EDEL). 2 stretches are compositionally biased toward basic and acidic residues: residues 599 to 656 (AGKE…PEEK) and 896 to 906 (KPKDKAKDKNS). Residues 907–916 (TSESSKANST) are compositionally biased toward polar residues. Composition is skewed to basic and acidic residues over residues 918–949 (DAEK…KAEE) and 960–980 (TDDK…EDEL). The Prevents secretion from ER signature appears at 977–980 (EDEL).

It belongs to the heat shock protein 70 family.

It localises to the endoplasmic reticulum lumen. Functionally, has a pivotal role in cytoprotective cellular mechanisms triggered by oxygen deprivation. May play a role as a molecular chaperone and participate in protein folding. In Danio rerio (Zebrafish), this protein is Hypoxia up-regulated protein 1 (hyou1).